Reading from the N-terminus, the 490-residue chain is Hydroxysteroid dehydrogenase-like protein 2 (490 aa).

NADP(+) contacts are provided by residues glycine 17–glycine 23, lysine 42, and aspartate 74. An N6-(2-hydroxyisobutyryl)lysine modification is found at lysine 42. The residue at position 116 (lysine 116) is an N6-acetyllysine. Catalysis depends on tyrosine 168, which acts as the Proton acceptor. Lysine 172 provides a ligand contact to NADP(+). Basic and acidic residues predominate over residues methionine 282–leucine 301. Residues methionine 282–glutamine 370 form a disordered region. The segment covering glutamine 302 to proline 367 has biased composition (low complexity). Positions glycine 380–asparagine 487 constitute an SCP2 domain. Lysine 390 carries the N6-succinyllysine modification.

This sequence belongs to the short-chain dehydrogenases/reductases (SDR) family. Widely expressed.

It is found in the peroxisome. The protein resides in the mitochondrion. Functionally, has apparently no steroid dehydrogenase activity. Controls bile acid (BA) and lipid metabolism in response to nutritional cues. The chain is Hydroxysteroid dehydrogenase-like protein 2 (Hsdl2) from Mus musculus (Mouse).